We begin with the raw amino-acid sequence, 132 residues long: Small ribosomal subunit protein uS8 (132 aa).

The protein belongs to the universal ribosomal protein uS8 family. In terms of assembly, part of the 30S ribosomal subunit. Contacts proteins S5 and S12.

Its function is as follows. One of the primary rRNA binding proteins, it binds directly to 16S rRNA central domain where it helps coordinate assembly of the platform of the 30S subunit. This chain is Small ribosomal subunit protein uS8, found in Acidobacterium capsulatum (strain ATCC 51196 / DSM 11244 / BCRC 80197 / JCM 7670 / NBRC 15755 / NCIMB 13165 / 161).